Reading from the N-terminus, the 451-residue chain is C4-dicarboxylate transport protein (451 aa).

Transmembrane regions (helical) follow at residues 17 to 37 (SLYV…HFYP), 53 to 73 (LIKM…IAGM), 85 to 105 (LALL…LIVV), 153 to 173 (AFAK…GFAL), 193 to 213 (VLFT…FGAM), 231 to 251 (LMGS…GLIA), 306 to 326 (GYSF…VFIA), 339 to 359 (ITLL…TGSG), and 361 to 381 (IVLA…LALI).

The protein belongs to the dicarboxylate/amino acid:cation symporter (DAACS) (TC 2.A.23) family.

It is found in the cell inner membrane. Functionally, responsible for the transport of dicarboxylates such as succinate, fumarate, and malate from the periplasm across the membrane. In Paracidovorax citrulli (strain AAC00-1) (Acidovorax citrulli), this protein is C4-dicarboxylate transport protein.